The following is a 111-amino-acid chain: uncharacterized protein (111 aa).

A helical membrane pass occupies residues 20-39 (PVDTTGLIFFAVFASSFVLY).

It is found in the membrane. This is an uncharacterized protein from Saccharomyces cerevisiae (strain ATCC 204508 / S288c) (Baker's yeast).